The primary structure comprises 211 residues: MGKKPVVIGIAGGSGSGKTSVTRSIYEQFKGHSILMLEQDLYYKDQSHLPFEERLNTNYDHPLAFDNDYLIEHLNELLAYRPIKKPIYDYKLHTRSEEVVHVDPKDVIILEGILVLEDERLRDLMDIKLYVDTDADLRIIRRMLRDIKERGRSIDSVIEQYISVVRPMHNQFVEPTKRYADIIIPEGGQNRVAIDLMVTKIQTILEQNAIL.

An ATP-binding site is contributed by 12-19 (GGSGSGKT).

It belongs to the uridine kinase family.

It is found in the cytoplasm. The enzyme catalyses uridine + ATP = UMP + ADP + H(+). The catalysed reaction is cytidine + ATP = CMP + ADP + H(+). The protein operates within pyrimidine metabolism; CTP biosynthesis via salvage pathway; CTP from cytidine: step 1/3. It participates in pyrimidine metabolism; UMP biosynthesis via salvage pathway; UMP from uridine: step 1/1. The sequence is that of Uridine kinase from Bacillus licheniformis (strain ATCC 14580 / DSM 13 / JCM 2505 / CCUG 7422 / NBRC 12200 / NCIMB 9375 / NCTC 10341 / NRRL NRS-1264 / Gibson 46).